The following is a 118-amino-acid chain: Large ribosomal subunit protein uL18 (118 aa).

Positions 1-10 are enriched in basic and acidic residues; it reads MKTTRRDATR. The tract at residues 1-20 is disordered; it reads MKTTRRDATRSRHQRVRRKV. The segment covering 11 to 20 has biased composition (basic residues); it reads SRHQRVRRKV.

This sequence belongs to the universal ribosomal protein uL18 family. Part of the 50S ribosomal subunit; part of the 5S rRNA/L5/L18/L25 subcomplex. Contacts the 5S and 23S rRNAs.

Its function is as follows. This is one of the proteins that bind and probably mediate the attachment of the 5S RNA into the large ribosomal subunit, where it forms part of the central protuberance. This Acaryochloris marina (strain MBIC 11017) protein is Large ribosomal subunit protein uL18.